The sequence spans 190 residues: Potassium-transporting ATPase KdpC subunit (190 aa).

A helical membrane pass occupies residues 10–30; the sequence is VLLLVLTGLTGFAYPLLSTAI.

This sequence belongs to the KdpC family. As to quaternary structure, the system is composed of three essential subunits: KdpA, KdpB and KdpC.

It localises to the cell inner membrane. Its function is as follows. Part of the high-affinity ATP-driven potassium transport (or Kdp) system, which catalyzes the hydrolysis of ATP coupled with the electrogenic transport of potassium into the cytoplasm. This subunit acts as a catalytic chaperone that increases the ATP-binding affinity of the ATP-hydrolyzing subunit KdpB by the formation of a transient KdpB/KdpC/ATP ternary complex. This is Potassium-transporting ATPase KdpC subunit from Sorangium cellulosum (strain So ce56) (Polyangium cellulosum (strain So ce56)).